The chain runs to 2242 residues: Large tegument protein deneddylase (2242 aa).

The tract at residues 1-238 (MKVTQASCHQ…IDLTGVVRES (238 aa)) is deubiquitination activity. A Peptidase C76 domain is found at 4 to 226 (TQASCHQGDI…AARLVSTYRD (223 aa)). Active-site residues include cysteine 24, aspartate 160, and histidine 162. Positions 239-318 (ADTAATTTTA…KTLATASSSS (80 aa)) are disordered. Low complexity predominate over residues 240–250 (DTAATTTTAAP). Positions 251–268 (SLPPLPDPIVDPGCPPGV) are enriched in pro residues. The span at 304 to 318 (PSTTSKTLATASSSS) shows a compositional bias: low complexity. Residues 328–332 (SSAVP) are interaction with inner tegument protein. Residues 1173–1190 (SQQKMEGQLQETRQQMTE) show a composition bias toward polar residues. The interval 1173 to 1229 (SQQKMEGQLQETRQQMTETSERLDRSLRQDPGSSSVTRVPEKPFKGQELAGRITPPP) is disordered. Residues 1191-1200 (TSERLDRSLR) are compositionally biased toward basic and acidic residues.

The protein belongs to the herpesviridae large tegument protein family. In terms of assembly, interacts with host CUL1 and CUL4A; these interactions inhibit the E3 ligase activity of cullins. Interacts with inner tegument protein. Interacts with capsid vertex specific component CVC2. Interacts with the major capsid protein/MCP.

It localises to the virion tegument. It is found in the host cytoplasm. Its subcellular location is the host nucleus. It carries out the reaction Thiol-dependent hydrolysis of ester, thioester, amide, peptide and isopeptide bonds formed by the C-terminal Gly of ubiquitin (a 76-residue protein attached to proteins as an intracellular targeting signal).. Large tegument protein that plays multiple roles in the viral cycle. During viral entry, remains associated with the capsid while most of the tegument is detached and participates in the capsid transport toward the host nucleus. Plays a role in the routing of the capsid at the nuclear pore complex and subsequent uncoating. Within the host nucleus, acts as a deneddylase and promotes the degradation of nuclear CRLs (cullin-RING ubiquitin ligases) and thereby stabilizes nuclear CRL substrates, while cytoplasmic CRLs remain unaffected. These modifications prevent host cell cycle S-phase progression and create a favorable environment allowing efficient viral genome replication. Participates later in the secondary envelopment of capsids. Indeed, plays a linker role for the association of the outer viral tegument to the capsids together with the inner tegument protein. This chain is Large tegument protein deneddylase, found in Homo sapiens (Human).